A 31-amino-acid polypeptide reads, in one-letter code: Cytochrome b6-f complex subunit 6 (31 aa).

A helical membrane pass occupies residues 4 to 24 (ITSYFGFLLVVLTITSALFIG).

Belongs to the PetL family. In terms of assembly, the 4 large subunits of the cytochrome b6-f complex are cytochrome b6, subunit IV (17 kDa polypeptide, PetD), cytochrome f and the Rieske protein, while the 4 small subunits are PetG, PetL, PetM and PetN. The complex functions as a dimer.

The protein localises to the plastid. The protein resides in the chloroplast thylakoid membrane. Functionally, component of the cytochrome b6-f complex, which mediates electron transfer between photosystem II (PSII) and photosystem I (PSI), cyclic electron flow around PSI, and state transitions. PetL is important for photoautotrophic growth as well as for electron transfer efficiency and stability of the cytochrome b6-f complex. This is Cytochrome b6-f complex subunit 6 from Jasminum nudiflorum (Winter jasmine).